The primary structure comprises 238 residues: Urease subunit alpha (238 aa).

Residues 1 to 102 (MKLTPKELDK…LVTVHTPIES (102 aa)) form a urease gamma region. The interval 103–238 (KGKLVPGELF…DDNYVKTIKE (136 aa)) is urease beta.

It in the N-terminal section; belongs to the urease gamma subunit family. The protein in the C-terminal section; belongs to the urease beta subunit family. Heterohexamer of 3 UreA (alpha) and 3 UreB (beta) subunits.

It is found in the cytoplasm. The enzyme catalyses urea + 2 H2O + H(+) = hydrogencarbonate + 2 NH4(+). It participates in nitrogen metabolism; urea degradation; CO(2) and NH(3) from urea (urease route): step 1/1. The polypeptide is Urease subunit alpha (Helicobacter acinonychis (strain Sheeba)).